A 497-amino-acid polypeptide reads, in one-letter code: MRAILLFYMYYAVTKGGLGMSQTTAASIMSIYGSLVYLSTLVGGWLSDRVWGSRKTVFYGGVLIMLGHIVLALPAGVTVLYRSIALIVVGTGLLKPNVSDMVGGLYSVEDPRRDAGFSIFVFGINLGSIIAPWLVPWAAQGFGVHIFGSQLNFHAGFSLAAVGMFFGLVQYVLGGKKYLSTESLTPNDPIDKGDLLNVIKWVVIIIIAIVAILAAMAGVGQLSVDNVITLLTILAIALPIYYFVMMFRSSKVTKIELGIHLLPVSLKNRLFFKKGYKRLKQIIQLELAIKRQSFIILIALIIMASILIPNKVIIAKHLLKLVLLVFYWIGLNLIPFSTFVLSFLFLDYIKHMFKKEGEQAKKTKEKSRIHHGIEIPLFLRQLIINIFTLIILEGETLFDENGVEVNIAEHPVQGYTELNINLLNKDSIDLWADWIQSVAKYLLNIMYTADVIVIIIFYLVKMAALWWAWSYIPLSTVFVGYKYSGKDESLQAALEVL.

Transmembrane regions (helical) follow at residues 3 to 23 (AILL…MSQT), 26 to 46 (ASIM…GGWL), 57 to 77 (VFYG…PAGV), 84 to 104 (IALI…MVGG), 119 to 139 (IFVF…PWAA), 155 to 175 (AGFS…VLGG), 199 to 219 (IKWV…MAGV), 227 to 247 (VITL…VMMF), 294 to 314 (FIIL…KVII), 321 to 341 (LVLL…TFVL), 372 to 392 (GIEI…LIIL), and 452 to 472 (IVII…WSYI).

The protein belongs to the major facilitator superfamily. Proton-dependent oligopeptide transporter (POT/PTR) (TC 2.A.17) family.

It localises to the cell membrane. Its function is as follows. Proton-dependent uptake of di- or tri-peptides. This Lactobacillus helveticus (Lactobacillus suntoryeus) protein is Di-/tripeptide transporter (dtpT).